The primary structure comprises 287 residues: Small ribosomal subunit protein uS2 (287 aa).

Residues 254–277 show a composition bias toward low complexity; it reads LASATASATPSATASTTALTDAPA. The segment at 254–287 is disordered; the sequence is LASATASATPSATASTTALTDAPAGATEPTTDAS.

This sequence belongs to the universal ribosomal protein uS2 family.

This is Small ribosomal subunit protein uS2 (rpsB) from Mycobacterium tuberculosis (strain CDC 1551 / Oshkosh).